The chain runs to 221 residues: Oxaloacetate tautomerase FAHD1, mitochondrial (221 aa).

The transit peptide at 1 to 24 (MAASRPLSRFWEWGKNIVCVGRNY) directs the protein to the mitochondrion. Ser-37 bears the Phosphoserine mark. Residues Glu-68, Glu-70, and Asp-99 each coordinate Mg(2+). Lys-110 carries the post-translational modification N6-acetyllysine. Position 112 is an N6-succinyllysine (Lys-112).

This sequence belongs to the FAH family. Homodimer. Requires Mg(2+) as cofactor. The cofactor is Mn(2+).

It is found in the mitochondrion. It localises to the cytoplasm. Its subcellular location is the cytosol. The enzyme catalyses oxaloacetate = enol-oxaloacetate. It catalyses the reaction oxaloacetate + H(+) = pyruvate + CO2. It carries out the reaction a 3-acylpyruvate + H2O = a carboxylate + pyruvate + H(+). The catalysed reaction is acetylpyruvate + H2O = acetate + pyruvate + H(+). The enzyme catalyses 3-fumarylpyruvate + H2O = fumarate + pyruvate + H(+). Oxaloacetate decarboxylation is competitively inhibited by oxalate. Functionally, tautomerase that converts enol-oxaloacetate, a strong inhibitor of succinate dehydrogenase, to the physiological keto form of oxaloacetate. It is thereby required to maximize aerobic respiration efficiency by preventing succinate dehydrogenase inhibition. Also acts as a weak oxaloacetate decarboxylase (ODx), catalyzing the decarboxylation of oxaloacetate (OAA) to pyruvate and CO(2), and as such is likely a regulatory enzyme in the TCA cycle. Also displays acylpyruvase activity, being able to hydrolyze acetylpyruvate and fumarylpyruvate in vitro. The protein is Oxaloacetate tautomerase FAHD1, mitochondrial (FAHD1) of Pongo abelii (Sumatran orangutan).